The following is a 172-amino-acid chain: Protein CapG (172 aa).

The protein belongs to the transferase hexapeptide repeat family.

Its pathway is capsule biogenesis; capsule polysaccharide biosynthesis. Its function is as follows. Required for the biosynthesis of type 1 capsular polysaccharide. This chain is Protein CapG (capG), found in Staphylococcus aureus.